Consider the following 532-residue polypeptide: Nitrogenase molybdenum-iron protein alpha chain (532 aa).

Cys62, Cys88, and Cys153 together coordinate [8Fe-7S] cluster. Residues Cys271 and His489 each contribute to the [7Fe-Mo-9S-C-homocitryl] cluster site.

The protein belongs to the NifD/NifK/NifE/NifN family. As to quaternary structure, tetramer of two alpha and two beta chains. Forms complex with the iron protein (nitrogenase component 2). It depends on [8Fe-7S] cluster as a cofactor. [7Fe-Mo-9S-C-homocitryl] cluster is required as a cofactor.

The catalysed reaction is N2 + 8 reduced [2Fe-2S]-[ferredoxin] + 16 ATP + 16 H2O = H2 + 8 oxidized [2Fe-2S]-[ferredoxin] + 2 NH4(+) + 16 ADP + 16 phosphate + 6 H(+). Functionally, this molybdenum-iron protein is part of the nitrogenase complex that catalyzes the key enzymatic reactions in nitrogen fixation. This is Nitrogenase molybdenum-iron protein alpha chain (nifD2) from Methanosarcina barkeri.